The primary structure comprises 101 residues: NADH-quinone oxidoreductase subunit K (101 aa).

3 helical membrane-spanning segments follow: residues 4-24, 30-50, and 61-81; these read LAHF…GIFL, IVLL…FVAF, and VFVF…LAIL.

Belongs to the complex I subunit 4L family. In terms of assembly, NDH-1 is composed of 14 different subunits. Subunits NuoA, H, J, K, L, M, N constitute the membrane sector of the complex.

The protein localises to the cell inner membrane. The enzyme catalyses a quinone + NADH + 5 H(+)(in) = a quinol + NAD(+) + 4 H(+)(out). Its function is as follows. NDH-1 shuttles electrons from NADH, via FMN and iron-sulfur (Fe-S) centers, to quinones in the respiratory chain. The immediate electron acceptor for the enzyme in this species is believed to be ubiquinone. Couples the redox reaction to proton translocation (for every two electrons transferred, four hydrogen ions are translocated across the cytoplasmic membrane), and thus conserves the redox energy in a proton gradient. This chain is NADH-quinone oxidoreductase subunit K, found in Cupriavidus taiwanensis (strain DSM 17343 / BCRC 17206 / CCUG 44338 / CIP 107171 / LMG 19424 / R1) (Ralstonia taiwanensis (strain LMG 19424)).